We begin with the raw amino-acid sequence, 833 residues long: Protein translocase subunit SecA (833 aa).

ATP is bound by residues glutamine 87, 105–109 (GEGKT), and aspartate 494. Residues 789–816 (PAAVAYSGGEAEAGPAQPHREDPKVGRN) form a disordered region. Residues 806-815 (PHREDPKVGR) are compositionally biased toward basic and acidic residues. Cysteine 819, cysteine 821, cysteine 830, and cysteine 831 together coordinate Zn(2+).

Belongs to the SecA family. Monomer and homodimer. Part of the essential Sec protein translocation apparatus which comprises SecA, SecYEG and auxiliary proteins SecDF-YajC and YidC. Requires Zn(2+) as cofactor.

It is found in the cell inner membrane. The protein resides in the cytoplasm. The enzyme catalyses ATP + H2O + cellular proteinSide 1 = ADP + phosphate + cellular proteinSide 2.. Part of the Sec protein translocase complex. Interacts with the SecYEG preprotein conducting channel. Has a central role in coupling the hydrolysis of ATP to the transfer of proteins into and across the cell membrane, serving as an ATP-driven molecular motor driving the stepwise translocation of polypeptide chains across the membrane. This is Protein translocase subunit SecA from Nitratidesulfovibrio vulgaris (strain ATCC 29579 / DSM 644 / CCUG 34227 / NCIMB 8303 / VKM B-1760 / Hildenborough) (Desulfovibrio vulgaris).